A 257-amino-acid chain; its full sequence is Phosphatidylglycerol--prolipoprotein diacylglyceryl transferase (257 aa).

Transmembrane regions (helical) follow at residues 13–33 (FGPIAVHWYGIFMAISIAVGG), 49–69 (FLLNLLMIVVIFGVIGARLMF), 88–108 (IYEGGLSWHGAVLGGFLAGLY), 123–143 (FAVVGLALGNMLVRVGNIFNH), 152–172 (FFFGRWPAQLVGVAIGAFLLI), 186–202 (YQFWSFIFYYQLLRGVF), and 223–243 (IGLFTMTQVATPFILILAYWM). Arginine 136 contributes to the a 1,2-diacyl-sn-glycero-3-phospho-(1'-sn-glycerol) binding site.

It belongs to the Lgt family.

The protein localises to the cell membrane. The catalysed reaction is L-cysteinyl-[prolipoprotein] + a 1,2-diacyl-sn-glycero-3-phospho-(1'-sn-glycerol) = an S-1,2-diacyl-sn-glyceryl-L-cysteinyl-[prolipoprotein] + sn-glycerol 1-phosphate + H(+). Its pathway is protein modification; lipoprotein biosynthesis (diacylglyceryl transfer). In terms of biological role, catalyzes the transfer of the diacylglyceryl group from phosphatidylglycerol to the sulfhydryl group of the N-terminal cysteine of a prolipoprotein, the first step in the formation of mature lipoproteins. The protein is Phosphatidylglycerol--prolipoprotein diacylglyceryl transferase of Caldanaerobacter subterraneus subsp. tengcongensis (strain DSM 15242 / JCM 11007 / NBRC 100824 / MB4) (Thermoanaerobacter tengcongensis).